We begin with the raw amino-acid sequence, 243 residues long: UDP-2,3-diacylglucosamine hydrolase (243 aa).

Mn(2+) is bound by residues aspartate 8, histidine 10, aspartate 41, asparagine 79, and histidine 114. 79-80 is a binding site for substrate; that stretch reads NR. Aspartate 122, lysine 164, lysine 167, and histidine 195 together coordinate substrate. Positions 195 and 197 each coordinate Mn(2+).

Belongs to the LpxH family. Requires Mn(2+) as cofactor.

It localises to the cell inner membrane. It carries out the reaction UDP-2-N,3-O-bis[(3R)-3-hydroxytetradecanoyl]-alpha-D-glucosamine + H2O = 2-N,3-O-bis[(3R)-3-hydroxytetradecanoyl]-alpha-D-glucosaminyl 1-phosphate + UMP + 2 H(+). The protein operates within glycolipid biosynthesis; lipid IV(A) biosynthesis; lipid IV(A) from (3R)-3-hydroxytetradecanoyl-[acyl-carrier-protein] and UDP-N-acetyl-alpha-D-glucosamine: step 4/6. Hydrolyzes the pyrophosphate bond of UDP-2,3-diacylglucosamine to yield 2,3-diacylglucosamine 1-phosphate (lipid X) and UMP by catalyzing the attack of water at the alpha-P atom. Involved in the biosynthesis of lipid A, a phosphorylated glycolipid that anchors the lipopolysaccharide to the outer membrane of the cell. The chain is UDP-2,3-diacylglucosamine hydrolase from Vibrio vulnificus (strain YJ016).